The primary structure comprises 186 residues: Adrenodoxin, mitochondrial (186 aa).

A mitochondrion-targeting transit peptide spans 1–58 (MAARLLRVASAALGDTAGRWRLLARPRAGAGGLRGSRGPGLGGGAVATRTLSVSGRAQ). Position 61 is a phosphoserine (Ser-61). An N6-acetyllysine; alternate modification is found at Lys-64. Lys-64 bears the N6-succinyllysine; alternate mark. Positions 65–169 (ITVHFINRDG…NMTVRVPDAV (105 aa)) constitute a 2Fe-2S ferredoxin-type domain. Cys-104, Cys-110, Cys-113, and Cys-150 together coordinate [2Fe-2S] cluster. Residue Lys-156 is modified to N6-succinyllysine. Position 175 is a phosphoserine (Ser-175).

It belongs to the adrenodoxin/putidaredoxin family. Interacts with CYP11A1. [2Fe-2S] cluster is required as a cofactor. As to expression, detected in adrenal cortex and corpus luteum (at protein level).

It is found in the mitochondrion matrix. Essential for the synthesis of various steroid hormones. Participates in the reduction of mitochondrial cytochrome P450 for steroidogenesis. Transfers electrons from adrenodoxin reductase to CYP11A1, a cytochrome P450 that catalyzes cholesterol side-chain cleavage to produce pregnenolone, the precursor of most steroid hormones. Does not form a ternary complex with adrenodoxin reductase and CYP11A1 but shuttles between the two enzymes to transfer electrons. This is Adrenodoxin, mitochondrial (FDX1) from Bos taurus (Bovine).